The chain runs to 100 residues: MAKVVEVGRICVKTRGREAGRKCVIVDIIDENFVLVTGPKSLTGVRRRRVNIDHIEILDKKVDIQKGASDEEVLKALEEAGLADFMREPVRIARITPFTL.

The protein belongs to the eukaryotic ribosomal protein eL14 family.

The chain is Large ribosomal subunit protein eL14 from Aeropyrum pernix (strain ATCC 700893 / DSM 11879 / JCM 9820 / NBRC 100138 / K1).